Consider the following 79-residue polypeptide: MDPPGYLLFLLLLPVAASQTSAGSCSGCGTLSLPLLAGLVAADAVMSLLIVGVVFVCMRPHGRPAQEDGRVYINMPGRG.

A signal peptide spans 1–17; that stretch reads MDPPGYLLFLLLLPVAA. Residues 18-35 are Extracellular-facing; the sequence is SQTSAGSCSGCGTLSLPL. Residues 36–56 traverse the membrane as a helical segment; the sequence is LAGLVAADAVMSLLIVGVVFV. The Cytoplasmic portion of the chain corresponds to 57-79; it reads CMRPHGRPAQEDGRVYINMPGRG. Tyr72 bears the Phosphotyrosine mark. The GRB2 binding site stretch occupies residues 72–74; that stretch reads YIN. The PIK3R1 binding site stretch occupies residues 72–75; sequence YINM.

Belongs to the DAP10 family. Homodimer; Disulfide-linked. Interacts with KLRK1 to form a stable complex, which results in surface expression of both proteins, whereas alone, it is minimally expressed. Interacts with PIK3R1 and GRB2. Interacts with CLEC5A. Forms an CLEC5A/TYROBP/HCST trimolecular complex depending almost solely on TYROBP. Heterohexamer composed of four subunits of HCST/DAP10 and two subunits of KLRK1. Interacts (via transmembrane domain) with KLRK1 isoform 1 (via transmembrane domain); the interaction is required for KLRK1 cell surface expression on naive NK cells and activated CD8(+) T-cells, but is dispensable on activated TYROBP-expressing NK cells. Interacts (via transmembrane domain) with KLRK1 isoform 2 (via transmembrane domain); the interaction is required for KLRK1 NK cell surface expression and induces NK cell-mediated cytotoxicity. Interacts with CD300H. In terms of processing, phosphorylated; PIK3R1 and GRB2 associate specifically with tyrosine-phosphorylated HCST. Post-translationally, O-glycosylated.

It is found in the membrane. In terms of biological role, transmembrane adapter protein which associates with KLRK1 to form an activation receptor KLRK1-HCST in lymphoid and myeloid cells; this receptor plays a major role in triggering cytotoxicity against target cells expressing cell surface ligands such as MHC class I chain-related MICA and MICB, and UL16-binding proteins (ULBPs); these ligands are up-regulated by stress conditions and pathological state such as viral infection and tumor transformation. Functions as a docking site for PI3-kinase PIK3R1 and GRB2. Interaction of ULBPs with KLRK1-HCST triggers calcium mobilization and activation of the PIK3R1, MAP2K/ERK, and JAK2/STAT5 signaling pathways. Both PIK3R1 and GRB2 are required for full KLRK1-HCST-mediated activation and ultimate killing of target cells. In NK cells, KLRK1-HCST signaling directly induces cytotoxicity and enhances cytokine production initiated via DAP12/TYROBP-associated receptors. In T-cells, it provides primarily costimulation for TCR-induced signals. KLRK1-HCST receptor plays a role in immune surveillance against tumors and is required for cytolysis of tumors cells; indeed, melanoma cells that do not express KLRK1 ligands escape from immune surveillance mediated by NK cells. In Mus musculus (Mouse), this protein is Hematopoietic cell signal transducer (Hcst).